Reading from the N-terminus, the 133-residue chain is Ribonuclease P protein component (133 aa).

The protein belongs to the RnpA family. In terms of assembly, consists of a catalytic RNA component (M1 or rnpB) and a protein subunit.

The catalysed reaction is Endonucleolytic cleavage of RNA, removing 5'-extranucleotides from tRNA precursor.. In terms of biological role, RNaseP catalyzes the removal of the 5'-leader sequence from pre-tRNA to produce the mature 5'-terminus. It can also cleave other RNA substrates such as 4.5S RNA. The protein component plays an auxiliary but essential role in vivo by binding to the 5'-leader sequence and broadening the substrate specificity of the ribozyme. In Corynebacterium glutamicum (strain ATCC 13032 / DSM 20300 / JCM 1318 / BCRC 11384 / CCUG 27702 / LMG 3730 / NBRC 12168 / NCIMB 10025 / NRRL B-2784 / 534), this protein is Ribonuclease P protein component.